A 351-amino-acid polypeptide reads, in one-letter code: Type II methyltransferase M.DsaV (351 aa).

The region spanning 6-312 (LKFIDLFAGI…QKMLSYIDLT (307 aa)) is the SAM-dependent MTase C5-type domain. Cysteine 75 is a catalytic residue.

This sequence belongs to the class I-like SAM-binding methyltransferase superfamily. C5-methyltransferase family.

It catalyses the reaction a 2'-deoxycytidine in DNA + S-adenosyl-L-methionine = a 5-methyl-2'-deoxycytidine in DNA + S-adenosyl-L-homocysteine + H(+). Its function is as follows. A methylase, recognizes the double-stranded sequence 5'-CCNGG-3', methylates C-2 on both strands, and protects the DNA from cleavage by the DsaV endonuclease. The sequence is that of Type II methyltransferase M.DsaV from Dactylococcopsis salina (Myxobaktron salinum).